The chain runs to 263 residues: 4-hydroxy-tetrahydrodipicolinate reductase (263 aa).

NAD(+) contacts are provided by residues 8–13 (GASGRM), aspartate 34, 99–101 (GTT), and 125–128 (SPNY). Histidine 157 functions as the Proton donor/acceptor in the catalytic mechanism. Histidine 158 contacts (S)-2,3,4,5-tetrahydrodipicolinate. Lysine 161 functions as the Proton donor in the catalytic mechanism. 167–168 (GT) serves as a coordination point for (S)-2,3,4,5-tetrahydrodipicolinate.

The protein belongs to the DapB family.

The protein localises to the cytoplasm. It catalyses the reaction (S)-2,3,4,5-tetrahydrodipicolinate + NAD(+) + H2O = (2S,4S)-4-hydroxy-2,3,4,5-tetrahydrodipicolinate + NADH + H(+). It carries out the reaction (S)-2,3,4,5-tetrahydrodipicolinate + NADP(+) + H2O = (2S,4S)-4-hydroxy-2,3,4,5-tetrahydrodipicolinate + NADPH + H(+). It participates in amino-acid biosynthesis; L-lysine biosynthesis via DAP pathway; (S)-tetrahydrodipicolinate from L-aspartate: step 4/4. Functionally, catalyzes the conversion of 4-hydroxy-tetrahydrodipicolinate (HTPA) to tetrahydrodipicolinate. The protein is 4-hydroxy-tetrahydrodipicolinate reductase of Methanococcoides burtonii (strain DSM 6242 / NBRC 107633 / OCM 468 / ACE-M).